The following is a 1356-amino-acid chain: MDLKEKHLGEPPSALGLSTRKALSVLKEQLEAVLEGHLRERKKCLTWKEVWRSSFLHHSNRCSCFHWPGASLMLLAVLLLLGCCGGQPAGSRGVGLVNASALFLLLLLNLVLIGRQDRLKRREVERRLRGIIDQIQDALRDGREIQWPSAMYPDLHMPFAPSWSLHWAYRDGHLVNLPVSLLVEGDIIALRPGQESFASLRGIKDDEHIVLEPGDLFPPFSPPPSPRGEVERGPQSPQQHRLFRVLETPVIDNIRWCLDMALSRPVTALDNERFTVQSVMLHYAVPVVLAGFLITNALRFIFSAPGVTSWQYTLLQLQVNGVLPILPLLFPVLWVLATACGEARVLAQMSKASPSSLLAKFSEDTLSSYTEAVSSQEMLRCIWGHFLRVLGGTSPTLSHSSSLLHSLGSVTVLCCVDKQGILSWPNPSPETVLFFSGKVEPPHSSHEDLTDGLSTRSFCHPEPHERDALLAGSLNNTLHLSNEQERGDWPGEAPKPPEPYSHHKAHGRSKHPSGSNVSFSRDTEGGEEEPSKTQPGMESDPYEAEDFVCDYHLEMLSLSQDQQNPSCIQFDDSNWQLHLTSLKPLGLNVLLNLCDASVTERLCRFSDHLCNIALQESHSAVLPVHVPWGLCELARLIGFTPGAKELFKQENHLALYRLPSAETMKETSLGRLSCVTKRRPPLSHMISLFIKDTTTSTEQMLSHGTADVVLEACTDFWDGADIYPLSGSDRKKVLDFYQRACLSGYCSAFAYKPMNCALSSQLNGKCIELVQVPGQSSIFTMCELPSTIPIKQNARRSSWSSDEGIGEVLEKEDCMQALSGQIFMGMVSSQYQARLDIVRLIDGLVNACIRFVYFSLEDELKSKVFAEKMGLETGWNCHISLTPNGDMPGSEIPPSSPSHAGSLHDDLNQVSRDDAEGLLLMEEEGHSDLISFQPTDSDIPSFLEDSNRAKLPRGIHQVRPHLQNIDNVPLLVPLFTDCTPETMCEMIKIMQEYGEVTCCLGSSANLRNSCLFLQSDISIALDPLYPSRCSWETFGYATSISMAQASDGLSPLQLSGQLNSLPCSLTFRQEETISIIRLIEQARHATYGIRKCFLFLLQCQLTLVVIQFLSCLVQLPPLLSTTDILWLSCFCYPLLSISLLGKPPHSSIMSMATGKNLQSIPKKTQHYFLLCFLLKFSLTISSCLICFGFTLQSFCDSSRDRNLTNCSSVMLPSNDDRAPAWFEDFANGLLSAQKLTAALIVLHTVFISITHVHRTKPLWRKSPLTNLWWAVTVPVVLLGQVVQTAVDLQLWTHRDSHVHFGLEDVPLLTWLLGCLSLVLVVVTNEIVKLHEIRVRVRYQKRQKLQFETKLGMNSPF.

Topologically, residues Met1 to Cys64 are cytoplasmic. Residues Phe65–Gly85 traverse the membrane as a helical segment. Residues Gly86 to Arg92 lie on the Lumenal side of the membrane. The chain crosses the membrane as a helical span at residues Gly93 to Ile113. The Cytoplasmic portion of the chain corresponds to Gly114–Arg273. 2 positions are modified to phosphoserine: Ser221 and Ser225. The chain crosses the membrane as a helical span at residues Phe274–Ile294. Residues Thr295 to Asn320 are Lumenal-facing. A helical transmembrane segment spans residues Gly321–Gly341. The Cytoplasmic segment spans residues Glu342–Cys1092. Positions Asp417–Leu422 match the DKQGIL motif. 2 disordered regions span residues Val439 to Pro461 and Glu483 to Pro541. Residues Glu440–Leu449 are compositionally biased toward basic and acidic residues. A phosphoserine mark is found at Ser444, Ser445, and Ser454. Residues His502–His511 are compositionally biased toward basic residues. Phosphoserine is present on residues Ser513, Ser518, Ser798, and Ser941. A helical transmembrane segment spans residues Phe1093–Val1113. At Gln1114–Ser1120 the chain is on the lumenal side. A helical membrane pass occupies residues Thr1121–Gly1141. The Cytoplasmic segment spans residues Lys1142–Tyr1167. A helical membrane pass occupies residues Phe1168 to Gly1188. The Lumenal portion of the chain corresponds to Phe1189–Gly1228. Residues Asn1202 and Asn1205 are each glycosylated (N-linked (GlcNAc...) asparagine). The chain crosses the membrane as a helical span at residues Leu1229–Ile1249. At Thr1250–Lys1261 the chain is on the cytoplasmic side. A helical membrane pass occupies residues Ser1262–Val1282. Topologically, residues Gln1283–Pro1306 are lumenal. A helical membrane pass occupies residues Leu1307–Val1327. Over Lys1328–Phe1356 the chain is Cytoplasmic. The short motif at Gly1351–Asn1353 is the GMN; metal-binding motif element.

As to quaternary structure, forms homooligomers. In terms of tissue distribution, expressed ubiquitously.

The protein localises to the endoplasmic reticulum membrane. Its function is as follows. Could function in the uptake of Mg(2+) from the cytosol into the endoplasmic reticulum and regulate intracellular Mg(2+) homeostasis. This chain is Transmembrane protein 94, found in Homo sapiens (Human).